The sequence spans 540 residues: Glucose-6-phosphate isomerase (540 aa).

Residue glutamate 350 is the Proton donor of the active site. Active-site residues include histidine 381 and lysine 503.

This sequence belongs to the GPI family.

The protein resides in the cytoplasm. It catalyses the reaction alpha-D-glucose 6-phosphate = beta-D-fructose 6-phosphate. It functions in the pathway carbohydrate biosynthesis; gluconeogenesis. The protein operates within carbohydrate degradation; glycolysis; D-glyceraldehyde 3-phosphate and glycerone phosphate from D-glucose: step 2/4. Functionally, catalyzes the reversible isomerization of glucose-6-phosphate to fructose-6-phosphate. This Paraburkholderia phymatum (strain DSM 17167 / CIP 108236 / LMG 21445 / STM815) (Burkholderia phymatum) protein is Glucose-6-phosphate isomerase.